The primary structure comprises 174 residues: Crossover junction endodeoxyribonuclease RuvC (174 aa).

Catalysis depends on residues Asp-8, Glu-67, and Asp-139. Residues Asp-8, Glu-67, and Asp-139 each coordinate Mg(2+).

It belongs to the RuvC family. As to quaternary structure, homodimer which binds Holliday junction (HJ) DNA. The HJ becomes 2-fold symmetrical on binding to RuvC with unstacked arms; it has a different conformation from HJ DNA in complex with RuvA. In the full resolvosome a probable DNA-RuvA(4)-RuvB(12)-RuvC(2) complex forms which resolves the HJ. Requires Mg(2+) as cofactor.

The protein resides in the cytoplasm. The enzyme catalyses Endonucleolytic cleavage at a junction such as a reciprocal single-stranded crossover between two homologous DNA duplexes (Holliday junction).. Its function is as follows. The RuvA-RuvB-RuvC complex processes Holliday junction (HJ) DNA during genetic recombination and DNA repair. Endonuclease that resolves HJ intermediates. Cleaves cruciform DNA by making single-stranded nicks across the HJ at symmetrical positions within the homologous arms, yielding a 5'-phosphate and a 3'-hydroxyl group; requires a central core of homology in the junction. The consensus cleavage sequence is 5'-(A/T)TT(C/G)-3'. Cleavage occurs on the 3'-side of the TT dinucleotide at the point of strand exchange. HJ branch migration catalyzed by RuvA-RuvB allows RuvC to scan DNA until it finds its consensus sequence, where it cleaves and resolves the cruciform DNA. The polypeptide is Crossover junction endodeoxyribonuclease RuvC (Pseudoalteromonas translucida (strain TAC 125)).